Consider the following 78-residue polypeptide: Putative membrane protein insertion efficiency factor (78 aa).

It belongs to the UPF0161 family.

The protein localises to the cell inner membrane. Its function is as follows. Could be involved in insertion of integral membrane proteins into the membrane. This is Putative membrane protein insertion efficiency factor from Prochlorococcus marinus (strain MIT 9301).